The sequence spans 578 residues: Arginine--tRNA ligase (578 aa).

The 'HIGH' region motif lies at 127–137 (PNLAKEMHVGH).

The protein belongs to the class-I aminoacyl-tRNA synthetase family. In terms of assembly, monomer.

The protein resides in the cytoplasm. The enzyme catalyses tRNA(Arg) + L-arginine + ATP = L-arginyl-tRNA(Arg) + AMP + diphosphate. The polypeptide is Arginine--tRNA ligase (Pseudomonas syringae pv. tomato (strain ATCC BAA-871 / DC3000)).